Here is a 264-residue protein sequence, read N- to C-terminus: Thymidylate synthase (264 aa).

Residue Arg-21 coordinates dUMP. His-51 is a binding site for (6R)-5,10-methylene-5,6,7,8-tetrahydrofolate. DUMP is bound at residue 126-127; the sequence is RR. The active-site Nucleophile is Cys-146. DUMP is bound by residues 166–169, Asn-177, and 207–209; these read RSAD and HIY. Residue Asp-169 participates in (6R)-5,10-methylene-5,6,7,8-tetrahydrofolate binding. A (6R)-5,10-methylene-5,6,7,8-tetrahydrofolate-binding site is contributed by Ala-263.

It belongs to the thymidylate synthase family. Bacterial-type ThyA subfamily. Homodimer.

Its subcellular location is the cytoplasm. The enzyme catalyses dUMP + (6R)-5,10-methylene-5,6,7,8-tetrahydrofolate = 7,8-dihydrofolate + dTMP. The protein operates within pyrimidine metabolism; dTTP biosynthesis. Its function is as follows. Catalyzes the reductive methylation of 2'-deoxyuridine-5'-monophosphate (dUMP) to 2'-deoxythymidine-5'-monophosphate (dTMP) while utilizing 5,10-methylenetetrahydrofolate (mTHF) as the methyl donor and reductant in the reaction, yielding dihydrofolate (DHF) as a by-product. This enzymatic reaction provides an intracellular de novo source of dTMP, an essential precursor for DNA biosynthesis. The sequence is that of Thymidylate synthase from Brucella anthropi (strain ATCC 49188 / DSM 6882 / CCUG 24695 / JCM 21032 / LMG 3331 / NBRC 15819 / NCTC 12168 / Alc 37) (Ochrobactrum anthropi).